The sequence spans 293 residues: 4-hydroxy-tetrahydrodipicolinate synthase (293 aa).

Pyruvate is bound at residue Thr-47. Tyr-135 (proton donor/acceptor) is an active-site residue. Lys-164 serves as the catalytic Schiff-base intermediate with substrate. Ile-205 is a pyruvate binding site.

This sequence belongs to the DapA family. Homotetramer; dimer of dimers.

It localises to the cytoplasm. The catalysed reaction is L-aspartate 4-semialdehyde + pyruvate = (2S,4S)-4-hydroxy-2,3,4,5-tetrahydrodipicolinate + H2O + H(+). It functions in the pathway amino-acid biosynthesis; L-lysine biosynthesis via DAP pathway; (S)-tetrahydrodipicolinate from L-aspartate: step 3/4. In terms of biological role, catalyzes the condensation of (S)-aspartate-beta-semialdehyde [(S)-ASA] and pyruvate to 4-hydroxy-tetrahydrodipicolinate (HTPA). This chain is 4-hydroxy-tetrahydrodipicolinate synthase, found in Symbiobacterium thermophilum (strain DSM 24528 / JCM 14929 / IAM 14863 / T).